Reading from the N-terminus, the 213-residue chain is StAR-related lipid transfer protein 5 (213 aa).

The 213-residue stretch at 1–213 (MDPSWATQES…LQKAVRKFHH (213 aa)) folds into the START domain.

In terms of tissue distribution, expressed in most tissues, with highest levels in liver and in kidney.

Functionally, may be involved in the intracellular transport of sterols or other lipids. May bind cholesterol or other sterols. The protein is StAR-related lipid transfer protein 5 (Stard5) of Mus musculus (Mouse).